A 631-amino-acid polypeptide reads, in one-letter code: Phosphomethylpyrimidine synthase (631 aa).

Substrate is bound by residues asparagine 239, methionine 268, tyrosine 297, histidine 333, 353-355, 394-397, and glutamate 433; these read SRG and DGLR. Histidine 437 is a binding site for Zn(2+). Tyrosine 460 contributes to the substrate binding site. A Zn(2+)-binding site is contributed by histidine 501. Residues cysteine 581, cysteine 584, and cysteine 589 each contribute to the [4Fe-4S] cluster site.

The protein belongs to the ThiC family. In terms of assembly, homodimer. [4Fe-4S] cluster serves as cofactor.

The enzyme catalyses 5-amino-1-(5-phospho-beta-D-ribosyl)imidazole + S-adenosyl-L-methionine = 4-amino-2-methyl-5-(phosphooxymethyl)pyrimidine + CO + 5'-deoxyadenosine + formate + L-methionine + 3 H(+). It participates in cofactor biosynthesis; thiamine diphosphate biosynthesis. Functionally, catalyzes the synthesis of the hydroxymethylpyrimidine phosphate (HMP-P) moiety of thiamine from aminoimidazole ribotide (AIR) in a radical S-adenosyl-L-methionine (SAM)-dependent reaction. This is Phosphomethylpyrimidine synthase from Salmonella arizonae (strain ATCC BAA-731 / CDC346-86 / RSK2980).